The sequence spans 383 residues: Putative glutamate--cysteine ligase 2-1 (383 aa).

This sequence belongs to the glutamate--cysteine ligase type 2 family. YbdK subfamily.

The catalysed reaction is L-cysteine + L-glutamate + ATP = gamma-L-glutamyl-L-cysteine + ADP + phosphate + H(+). Its function is as follows. ATP-dependent carboxylate-amine ligase which exhibits weak glutamate--cysteine ligase activity. The protein is Putative glutamate--cysteine ligase 2-1 of Legionella pneumophila (strain Corby).